The primary structure comprises 78 residues: MSRKCQLTGKKANNAYAVSHSHRRTKKLQEANLQWKRVWWPEGNRWVRLRLSTKAIKTLETKGLSVMAKEAGINLNKI.

The protein belongs to the bacterial ribosomal protein bL28 family.

The polypeptide is Large ribosomal subunit protein bL28 (Rippkaea orientalis (strain PCC 8801 / RF-1) (Cyanothece sp. (strain PCC 8801))).